We begin with the raw amino-acid sequence, 151 residues long: UPF0561 protein C2orf68 homolog (151 aa).

Residues 1-89 (MEEEGEAQGR…TLKDEPNDNG (89 aa)) are disordered. 2 stretches are compositionally biased toward basic and acidic residues: residues 32-46 (LARD…QAKE) and 70-85 (RQRE…KDEP).

It belongs to the UPF0561 family.

In Xenopus laevis (African clawed frog), this protein is UPF0561 protein C2orf68 homolog.